A 415-amino-acid polypeptide reads, in one-letter code: Gamma-glutamyl phosphate reductase (415 aa).

This sequence belongs to the gamma-glutamyl phosphate reductase family.

It is found in the cytoplasm. It carries out the reaction L-glutamate 5-semialdehyde + phosphate + NADP(+) = L-glutamyl 5-phosphate + NADPH + H(+). Its pathway is amino-acid biosynthesis; L-proline biosynthesis; L-glutamate 5-semialdehyde from L-glutamate: step 2/2. Catalyzes the NADPH-dependent reduction of L-glutamate 5-phosphate into L-glutamate 5-semialdehyde and phosphate. The product spontaneously undergoes cyclization to form 1-pyrroline-5-carboxylate. This Listeria monocytogenes serotype 4a (strain HCC23) protein is Gamma-glutamyl phosphate reductase.